Here is a 190-residue protein sequence, read N- to C-terminus: Recombination protein RecR (190 aa).

Residues 58–73 form a C4-type zinc finger; that stretch reads CTQCGGLSEDELCYIC. In terms of domain architecture, Toprim spans 81–167; it reads SSLCLVESAR…HFTKIAQGVP (87 aa).

This sequence belongs to the RecR family.

In terms of biological role, may play a role in DNA repair. It seems to be involved in an RecBC-independent recombinational process of DNA repair. It may act with RecF and RecO. This Nitratiruptor sp. (strain SB155-2) protein is Recombination protein RecR.